Reading from the N-terminus, the 134-residue chain is MKCSVLPRSRLSWTMCVLLLPLLMLMLEGGVQGCFIRNCPRGGKRAVDSVQPTRQCMSCGPEGVGQCVGPSICCGLAIGCLMGTSEAEVCQKENESSAPCAVSGRHCGMDNTGNCVADGICCVEDACSFNSLCR.

An N-terminal signal peptide occupies residues 1–33 (MKCSVLPRSRLSWTMCVLLLPLLMLMLEGGVQG). A disulfide bond links cysteine 34 and cysteine 39. Residues 44 to 50 (KRAVDSV) constitute a propeptide that is removed on maturation. Intrachain disulfides connect cysteine 56–cysteine 100, cysteine 59–cysteine 73, cysteine 67–cysteine 90, cysteine 74–cysteine 80, cysteine 107–cysteine 121, cysteine 115–cysteine 133, and cysteine 122–cysteine 127.

This sequence belongs to the vasopressin/oxytocin family. Contains 7 disulfide bonds. As to expression, expressed by the venom duct.

The protein localises to the secreted. This Terebra subulata (Chocolate spotted auger) protein is Terepressin/terephysin.